Reading from the N-terminus, the 441-residue chain is MYIGAKEYFPGIGKIGFEGRDSDNPLAFKVYDANKTIGDKTMAEHLRFAVAYWHSFCGNGADPFGPGTRAYPWDVGDTALNRAEAKADAAFEFFTKLGVPYYCFHDIDLSPDADDITEYESNLKHMVGVARQRQADTGIKLLWGTANLFSHPRYMNGASTNPDFNVVARAAVQVKAAIDATVALGGENYVFWGGREGYACLHNTQMKREQDNMARFLTLARDYGRSIGFKGNFLIEPKPMEPMKHQYDFDSATVIGFLRQHGLDQDFKLNIEANHATLSGHSFEHDLQVASDAGLLGSIDANRGNAQNGWDTDQFPTDLYDTVGAMLVVLRQGGLAPGGLNFDAKVRRESSDPQDLFLAHIGGMDAFARGLEVANALLTASPLEQWRAERYASFDSGAGADFAAGKTTLADLAKHAAGNAPQQISGRQEAYENLINQYLTR.

Active-site residues include His105 and Asp108. Residues Glu236, Glu272, His275, Asp300, Asp311, Asp313, and Asp343 each coordinate Mg(2+).

The protein belongs to the xylose isomerase family. As to quaternary structure, homotetramer. Mg(2+) serves as cofactor.

It is found in the cytoplasm. It carries out the reaction alpha-D-xylose = alpha-D-xylulofuranose. The chain is Xylose isomerase 1 (xylA1) from Xanthomonas axonopodis pv. citri (strain 306).